The following is a 374-amino-acid chain: Phosphoserine aminotransferase (374 aa).

An L-glutamate-binding site is contributed by arginine 46. Pyridoxal 5'-phosphate-binding positions include 80–81, phenylalanine 104, threonine 150, aspartate 174, and glutamine 197; that span reads AT. Lysine 198 is modified (N6-(pyridoxal phosphate)lysine). 249-250 lines the pyridoxal 5'-phosphate pocket; that stretch reads NT.

This sequence belongs to the class-V pyridoxal-phosphate-dependent aminotransferase family. SerC subfamily. As to quaternary structure, homodimer. Pyridoxal 5'-phosphate is required as a cofactor.

The protein localises to the cytoplasm. It catalyses the reaction O-phospho-L-serine + 2-oxoglutarate = 3-phosphooxypyruvate + L-glutamate. The enzyme catalyses 4-(phosphooxy)-L-threonine + 2-oxoglutarate = (R)-3-hydroxy-2-oxo-4-phosphooxybutanoate + L-glutamate. It functions in the pathway amino-acid biosynthesis; L-serine biosynthesis; L-serine from 3-phospho-D-glycerate: step 2/3. Its pathway is cofactor biosynthesis; pyridoxine 5'-phosphate biosynthesis; pyridoxine 5'-phosphate from D-erythrose 4-phosphate: step 3/5. Its function is as follows. Catalyzes the reversible conversion of 3-phosphohydroxypyruvate to phosphoserine and of 3-hydroxy-2-oxo-4-phosphonooxybutanoate to phosphohydroxythreonine. This is Phosphoserine aminotransferase from Nocardioides sp. (strain ATCC BAA-499 / JS614).